The sequence spans 535 residues: Alpha-1,3-mannosyl-glycoprotein 4-beta-N-acetylglucosaminyltransferase A (535 aa).

The Cytoplasmic segment spans residues 1–4; it reads MRLR. The chain crosses the membrane as a helical; Signal-anchor for type II membrane protein span at residues 5-27; sequence NGTVATALAFITSFLTLSWYTTW. Residues 28-63 are a coiled coil; it reads QNGKEKLIAYQREFLALKERLRIAEHRISQRSSELN. Residues 28 to 535 lie on the Lumenal side of the membrane; that stretch reads QNGKEKLIAY…NEIHIKKATK (508 aa). N-linked (GlcNAc...) asparagine glycans are attached at residues N77 and N458. S474 carries the post-translational modification Phosphoserine.

It belongs to the glycosyltransferase 54 family. A divalent metal cation serves as cofactor. Post-translationally, N-glycosylated.

Its subcellular location is the golgi apparatus membrane. It localises to the secreted. It carries out the reaction N(4)-{beta-D-GlcNAc-(1-&gt;2)-alpha-D-Man-(1-&gt;3)-[beta-D-GlcNAc-(1-&gt;2)-alpha-D-Man-(1-&gt;6)]-beta-D-Man-(1-&gt;4)-beta-D-GlcNAc-(1-&gt;4)-beta-D-GlcNAc}-L-asparaginyl-[protein] + UDP-N-acetyl-alpha-D-glucosamine = N(4)-{beta-D-GlcNAc-(1-&gt;2)-[beta-D-GlcNAc-(1-&gt;4)]-alpha-D-Man-(1-&gt;3)-[beta-D-GlcNAc-(1-&gt;2)-alpha-D-Man-(1-&gt;6)]-beta-D-Man-(1-&gt;4)-beta-D-GlcNAc-(1-&gt;4)-beta-D-GlcNAc}-L-asparaginyl-[protein] + UDP + H(+). The catalysed reaction is an N(4)-{beta-D-GlcNAc-(1-&gt;2)-alpha-D-Man-(1-&gt;3)-[alpha-D-Man-(1-&gt;6)]-beta-D-Man-(1-&gt;4)-beta-D-GlcNAc-(1-&gt;4)-beta-D-GlcNAc}-L-asparaginyl-[protein] + UDP-N-acetyl-alpha-D-glucosamine = an N(4)-{beta-D-GlcNAc-(1-&gt;2)-[beta-D-GlcNAc-(1-&gt;4)]-alpha-D-Man-(1-&gt;3)-[alpha-D-Man-(1-&gt;6)]-beta-D-Man-(1-&gt;4)-beta-D-GlcNAc-(1-&gt;4)-beta-D-GlcNAc}-L-asparaginyl-[protein] + UDP + H(+). It catalyses the reaction an N(4)-{beta-D-GlcNAc-(1-&gt;2)-alpha-D-Man-(1-&gt;3)-[beta-D-GlcNAc-(1-&gt;2)-[beta-D-GlcNAc-(1-&gt;6)]-alpha-D-Man-(1-&gt;6)]-beta-D-Man-(1-&gt;4)-beta-D-GlcNAc-(1-&gt;4)-beta-D-GlcNAc}-L-asparaginyl-[protein] + UDP-N-acetyl-alpha-D-glucosamine = an N(4)-{beta-D-GlcNAc-(1-&gt;2)-[beta-D-GlcNAc-(1-&gt;4)]-alpha-D-Man-(1-&gt;3)-[beta-D-GlcNAc-(1-&gt;2)-[beta-D-GlcNAc-(1-&gt;6)]-alpha-D-Man-(1-&gt;6)]-beta-D-Man-(1-&gt;4)-beta-D-GlcNAc-(1-&gt;4)-beta-D-GlcNAc}-L-asparaginyl-[protein] + UDP + H(+). The enzyme catalyses an N(4)-{beta-D-GlcNAc-(1-&gt;2)-alpha-D-Man-(1-&gt;3)-[beta-D-GlcNAc-(1-&gt;2)-alpha-D-Man-(1-&gt;6)]-beta-D-Man-(1-&gt;4)-beta-D-GlcNAc-(1-&gt;4)-[alpha-L-Fuc-(1-&gt;6)]-beta-D-GlcNAc}-L-asparaginyl-[protein] + UDP-N-acetyl-alpha-D-glucosamine = N(4)-{beta-D-GlcNAc-(1-&gt;2)-[beta-D-GlcNAc-(1-&gt;4)]-alpha-D-Man-(1-&gt;3)-[beta-D-GlcNAc-(1-&gt;2)-alpha-D-Man-(1-&gt;6)]-beta-D-Man-(1-&gt;4)-beta-D-GlcNAc-(1-&gt;4)-[alpha-L-Fuc-(1-&gt;6)]-beta-D-GlcNAc}-asparaginyl-[protein] + UDP + H(+). It carries out the reaction an N(4)-{beta-D-GlcNAc-(1-&gt;2)-alpha-D-Man-(1-&gt;3)-[beta-D-Gal-(1-&gt;4)-beta-D-GlcNAc-(1-&gt;2)-alpha-D-Man-(1-&gt;6)]-beta-D-Man-(1-&gt;4)-beta-D-GlcNAc-(1-&gt;4)-beta-D-GlcNAc}-L-asparaginyl-[protein] + UDP-N-acetyl-alpha-D-glucosamine = an N(4)-{beta-D-GlcNAc-(1-&gt;2)-[beta-D-GlcNAc-(1-&gt;4)]-alpha-D-Man-(1-&gt;3)-[beta-D-Gal-(1-&gt;4)-beta-D-GlcNAc-(1-&gt;2)-alpha-D-Man-(1-&gt;6)]-beta-D-Man-(1-&gt;4)-beta-D-GlcNAc-(1-&gt;4)-beta-D-GlcNAc}-L-asparaginyl-[protein] + UDP + H(+). The catalysed reaction is N(4)-{beta-D-GlcNAc-(1-&gt;2)-alpha-D-Man-(1-&gt;3)-[alpha-D-Man-(1-&gt;3)-{alpha-D-Man-(1-&gt;6)}-alpha-D-Man-(1-&gt;6)]-beta-D-Man-(1-&gt;4)-beta-D-GlcNAc-(1-&gt;4)-beta-D-GlcNAc}-asparaginyl-[protein] + UDP-N-acetyl-alpha-D-glucosamine = N(4)-{beta-D-GlcNAc-(1-&gt;2)-[beta-D-GlcNAc-(1-&gt;4)]-alpha-D-Man-(1-&gt;3)-[alpha-D-Man-(1-&gt;3)-{alpha-D-Man-(1-&gt;6)}-alpha-D-Man-(1-&gt;6)]-beta-D-Man-(1-&gt;4)-beta-D-GlcNAc-(1-&gt;4)-beta-D-GlcNAc}-asparaginyl-[protein] + UDP + H(+). It catalyses the reaction N(4)-{beta-D-GlcNAc-(1-&gt;2)-alpha-D-Man-(1-&gt;3)-beta-D-Man-(1-&gt;4)-beta-D-GlcNAc-(1-&gt;4)-beta-D-GlcNAc}-asparaginyl-[protein] + UDP-N-acetyl-alpha-D-glucosamine = N(4)-{beta-D-GlcNAc-(1-&gt;2)-[beta-D-GlcNAc-(1-&gt;4)]-alpha-D-Man-(1-&gt;3)-beta-D-Man-(1-&gt;4)-beta-D-GlcNAc-(1-&gt;4)-beta-D-GlcNAc}-asparaginyl-[protein] + UDP + H(+). It functions in the pathway protein modification; protein glycosylation. With respect to regulation, inhibited by UDP. Functionally, glycosyltransferase that catalyze the transfer of GlcNAc from UDP-GlcNAc to the GlcNAcbeta1-2Manalpha1-3 arm of the core structure of N-linked glycans through a beta1-4 linkage and participates in the production of tri- and tetra-antennary N-linked sugar chains. Involved in glucose transport by mediating SLC2A2/GLUT2 glycosylation, thereby controlling cell-surface expression of SLC2A2 in pancreatic beta cells. This Macaca fascicularis (Crab-eating macaque) protein is Alpha-1,3-mannosyl-glycoprotein 4-beta-N-acetylglucosaminyltransferase A.